The following is a 449-amino-acid chain: Phosphoglucosamine mutase (449 aa).

The active-site Phosphoserine intermediate is Ser101. The Mg(2+) site is built by Ser101, Asp242, Asp244, and Asp246. Ser101 carries the phosphoserine modification.

Belongs to the phosphohexose mutase family. Mg(2+) is required as a cofactor. Activated by phosphorylation.

It catalyses the reaction alpha-D-glucosamine 1-phosphate = D-glucosamine 6-phosphate. Functionally, catalyzes the conversion of glucosamine-6-phosphate to glucosamine-1-phosphate. The protein is Phosphoglucosamine mutase of Hyphomonas neptunium (strain ATCC 15444).